The chain runs to 340 residues: Putative esterase YheT (340 aa).

An AB hydrolase-1 domain is found at 73–312 (PRLVVFHGLE…TEHGGHVGFI (240 aa)). Active-site charge relay system residues include serine 153, aspartate 280, and histidine 308.

It belongs to the AB hydrolase superfamily. AB hydrolase 4 family.

The chain is Putative esterase YheT (yheT) from Escherichia coli (strain K12).